Consider the following 502-residue polypeptide: Glycerol kinase (502 aa).

Position 14 (threonine 14) interacts with ADP. ATP-binding residues include threonine 14, threonine 15, and serine 16. Position 14 (threonine 14) interacts with sn-glycerol 3-phosphate. Position 18 (arginine 18) interacts with ADP. Sn-glycerol 3-phosphate-binding residues include arginine 84, glutamate 85, tyrosine 136, and aspartate 246. Arginine 84, glutamate 85, tyrosine 136, aspartate 246, and glutamine 247 together coordinate glycerol. ADP contacts are provided by threonine 268 and glycine 311. The ATP site is built by threonine 268, glycine 311, glutamine 315, and glycine 412. ADP is bound by residues glycine 412 and asparagine 416.

This sequence belongs to the FGGY kinase family. In terms of assembly, homotetramer and homodimer (in equilibrium). Heterodimer with EIIA-Glc. Binds 1 zinc ion per glycerol kinase EIIA-Glc dimer. The zinc ion is important for dimerization.

The catalysed reaction is glycerol + ATP = sn-glycerol 3-phosphate + ADP + H(+). It functions in the pathway polyol metabolism; glycerol degradation via glycerol kinase pathway; sn-glycerol 3-phosphate from glycerol: step 1/1. Its activity is regulated as follows. Activity of this regulatory enzyme is affected by several metabolites. Allosterically and non-competitively inhibited by fructose 1,6-bisphosphate (FBP) and unphosphorylated phosphocarrier protein EIIA-Glc (III-Glc), an integral component of the bacterial phosphotransferase (PTS) system. Its function is as follows. Key enzyme in the regulation of glycerol uptake and metabolism. Catalyzes the phosphorylation of glycerol to yield sn-glycerol 3-phosphate. The sequence is that of Glycerol kinase from Salmonella heidelberg (strain SL476).